A 313-amino-acid chain; its full sequence is Acetyl-coenzyme A carboxylase carboxyl transferase subunit beta, chloroplastic (313 aa).

In terms of domain architecture, CoA carboxyltransferase N-terminal spans 47 to 313; sequence LWTRCDNCEN…SAPCRRSNNS (267 aa). Zn(2+) is bound by residues Cys-51, Cys-54, Cys-70, and Cys-73. The C4-type zinc-finger motif lies at 51–73; it reads CDNCENMLYIRFLRQNKRICEEC.

This sequence belongs to the AccD/PCCB family. As to quaternary structure, acetyl-CoA carboxylase is a heterohexamer composed of biotin carboxyl carrier protein, biotin carboxylase and 2 subunits each of ACCase subunit alpha and ACCase plastid-coded subunit beta (accD). It depends on Zn(2+) as a cofactor.

It is found in the plastid. Its subcellular location is the chloroplast stroma. The enzyme catalyses N(6)-carboxybiotinyl-L-lysyl-[protein] + acetyl-CoA = N(6)-biotinyl-L-lysyl-[protein] + malonyl-CoA. The protein operates within lipid metabolism; malonyl-CoA biosynthesis; malonyl-CoA from acetyl-CoA: step 1/1. Component of the acetyl coenzyme A carboxylase (ACC) complex. Biotin carboxylase (BC) catalyzes the carboxylation of biotin on its carrier protein (BCCP) and then the CO(2) group is transferred by the transcarboxylase to acetyl-CoA to form malonyl-CoA. The polypeptide is Acetyl-coenzyme A carboxylase carboxyl transferase subunit beta, chloroplastic (Anthoceros angustus (Hornwort)).